The chain runs to 101 residues: Aspartyl/glutamyl-tRNA(Asn/Gln) amidotransferase subunit C (101 aa).

This sequence belongs to the GatC family. In terms of assembly, heterotrimer of A, B and C subunits.

The enzyme catalyses L-glutamyl-tRNA(Gln) + L-glutamine + ATP + H2O = L-glutaminyl-tRNA(Gln) + L-glutamate + ADP + phosphate + H(+). It carries out the reaction L-aspartyl-tRNA(Asn) + L-glutamine + ATP + H2O = L-asparaginyl-tRNA(Asn) + L-glutamate + ADP + phosphate + 2 H(+). In terms of biological role, allows the formation of correctly charged Asn-tRNA(Asn) or Gln-tRNA(Gln) through the transamidation of misacylated Asp-tRNA(Asn) or Glu-tRNA(Gln) in organisms which lack either or both of asparaginyl-tRNA or glutaminyl-tRNA synthetases. The reaction takes place in the presence of glutamine and ATP through an activated phospho-Asp-tRNA(Asn) or phospho-Glu-tRNA(Gln). The protein is Aspartyl/glutamyl-tRNA(Asn/Gln) amidotransferase subunit C of Lactobacillus delbrueckii subsp. bulgaricus (strain ATCC 11842 / DSM 20081 / BCRC 10696 / JCM 1002 / NBRC 13953 / NCIMB 11778 / NCTC 12712 / WDCM 00102 / Lb 14).